The primary structure comprises 89 residues: UPF0367 protein MAE_19160 (89 aa).

This sequence belongs to the UPF0367 family.

This is UPF0367 protein MAE_19160 from Microcystis aeruginosa (strain NIES-843 / IAM M-2473).